Consider the following 570-residue polypeptide: Urease subunit alpha (570 aa).

The region spanning 131–570 (GGMDSHIHFI…LPMAQRYFLF (440 aa)) is the Urease domain. Residues His136, His138, and Lys219 each coordinate Ni(2+). Lys219 is modified (N6-carboxylysine). His221 is a substrate binding site. Ni(2+)-binding residues include His248 and His274. Residue His322 is the Proton donor of the active site. Asp362 contributes to the Ni(2+) binding site.

The protein belongs to the metallo-dependent hydrolases superfamily. Urease alpha subunit family. Heterotrimer of UreA (gamma), UreB (beta) and UreC (alpha) subunits. Three heterotrimers associate to form the active enzyme. Ni cation serves as cofactor. Post-translationally, carboxylation allows a single lysine to coordinate two nickel ions.

It is found in the cytoplasm. It carries out the reaction urea + 2 H2O + H(+) = hydrogencarbonate + 2 NH4(+). It participates in nitrogen metabolism; urea degradation; CO(2) and NH(3) from urea (urease route): step 1/1. This chain is Urease subunit alpha, found in Rhizobium johnstonii (strain DSM 114642 / LMG 32736 / 3841) (Rhizobium leguminosarum bv. viciae).